The following is a 131-amino-acid chain: Large-conductance mechanosensitive channel (131 aa).

The next 3 helical transmembrane spans lie at 14–34, 38–58, and 67–87; these read IMDL…VTSL, IIMP…LAVT, and GSFI…FIVI.

This sequence belongs to the MscL family. Homopentamer.

It localises to the cell membrane. In terms of biological role, channel that opens in response to stretch forces in the membrane lipid bilayer. May participate in the regulation of osmotic pressure changes within the cell. This chain is Large-conductance mechanosensitive channel, found in Bacillus velezensis (strain DSM 23117 / BGSC 10A6 / LMG 26770 / FZB42) (Bacillus amyloliquefaciens subsp. plantarum).